A 614-amino-acid polypeptide reads, in one-letter code: uncharacterized protein (614 aa).

Helical transmembrane passes span 41–61 (GWIFLLAILTVGTGVMEAVLF), 87–107 (LIGMAALLLISIVWGFLASAV), 157–177 (DTVLTLANMFVYVLVYFITSG), and 178–198 (VVLVALDSWFLLPFITWIILF). The region spanning 43–330 (IFLLAILTVG…IMWESARLFE (288 aa)) is the ABC transmembrane type-1 domain. Positions 364 to 603 (IKFNDITFAY…NGLYAKLWNH (240 aa)) constitute an ABC transporter domain. 397-404 (GRSGAGKS) contacts ATP.

Belongs to the ABC transporter superfamily.

The protein resides in the cell membrane. This is an uncharacterized protein from Haemophilus influenzae (strain ATCC 51907 / DSM 11121 / KW20 / Rd).